A 460-amino-acid chain; its full sequence is ATP synthase subunit beta (460 aa).

150 to 157 (GGAGVGKT) is an ATP binding site.

The protein belongs to the ATPase alpha/beta chains family. As to quaternary structure, F-type ATPases have 2 components, CF(1) - the catalytic core - and CF(0) - the membrane proton channel. CF(1) has five subunits: alpha(3), beta(3), gamma(1), delta(1), epsilon(1). CF(0) has three main subunits: a(1), b(2) and c(9-12). The alpha and beta chains form an alternating ring which encloses part of the gamma chain. CF(1) is attached to CF(0) by a central stalk formed by the gamma and epsilon chains, while a peripheral stalk is formed by the delta and b chains.

Its subcellular location is the cell inner membrane. It catalyses the reaction ATP + H2O + 4 H(+)(in) = ADP + phosphate + 5 H(+)(out). In terms of biological role, produces ATP from ADP in the presence of a proton gradient across the membrane. The catalytic sites are hosted primarily by the beta subunits. The protein is ATP synthase subunit beta of Enterobacter sp. (strain 638).